Reading from the N-terminus, the 426-residue chain is Enolase (426 aa).

Gln-163 lines the (2R)-2-phosphoglycerate pocket. The active-site Proton donor is the Glu-205. Positions 242, 285, and 312 each coordinate Mg(2+). (2R)-2-phosphoglycerate contacts are provided by Lys-337, Arg-366, Ser-367, and Lys-388. Lys-337 (proton acceptor) is an active-site residue.

Belongs to the enolase family. Mg(2+) serves as cofactor.

It is found in the cytoplasm. The protein resides in the secreted. The protein localises to the cell surface. It carries out the reaction (2R)-2-phosphoglycerate = phosphoenolpyruvate + H2O. Its pathway is carbohydrate degradation; glycolysis; pyruvate from D-glyceraldehyde 3-phosphate: step 4/5. Its function is as follows. Catalyzes the reversible conversion of 2-phosphoglycerate (2-PG) into phosphoenolpyruvate (PEP). It is essential for the degradation of carbohydrates via glycolysis. The chain is Enolase from Desulfosudis oleivorans (strain DSM 6200 / JCM 39069 / Hxd3) (Desulfococcus oleovorans).